The following is a 176-amino-acid chain: Viral interleukin-10 homolog (176 aa).

Positions 1-25 (MLSVMVSSSLVLIVFFLGASEEAKP) are cleaved as a signal peptide. Cystine bridges form between cysteine 38–cysteine 128 and cysteine 82–cysteine 133. Asparagine 152 carries an N-linked (GlcNAc...) asparagine; by host glycan.

Belongs to the IL-10 family. Homodimer; disulfide-linked.

The protein resides in the secreted. In terms of biological role, functional viral IL-10 homolog. Can bind to the human IL-10 receptor and compete with human IL-10 for binding sites. Requires both subunits of the human IL-10 receptor complex to induce signal transduction events and biological activities. IL-10 signaling pathway has several immunosuppressive activities that are exploited by the virus. Inhibits TLR-induced type I interferon production in host plasmacytoid dendritic cells. This Homo sapiens (Human) protein is Viral interleukin-10 homolog (UL111A).